Here is a 473-residue protein sequence, read N- to C-terminus: Glutamate--tRNA ligase 1 (473 aa).

Positions 11 to 21 match the 'HIGH' region motif; it reads PSPTGYLHIGG. The segment covering 113–133 has biased composition (basic and acidic residues); sequence KARAEGRPPRYDGRWRDRDPS. Residues 113–136 form a disordered region; that stretch reads KARAEGRPPRYDGRWRDRDPSEAP. The short motif at 240–244 is the 'KMSKS' region element; the sequence is KLSKR. K243 contributes to the ATP binding site.

Belongs to the class-I aminoacyl-tRNA synthetase family. Glutamate--tRNA ligase type 1 subfamily. Monomer.

The protein localises to the cytoplasm. The enzyme catalyses tRNA(Glu) + L-glutamate + ATP = L-glutamyl-tRNA(Glu) + AMP + diphosphate. Its function is as follows. Catalyzes the attachment of glutamate to tRNA(Glu) in a two-step reaction: glutamate is first activated by ATP to form Glu-AMP and then transferred to the acceptor end of tRNA(Glu). This is Glutamate--tRNA ligase 1 from Brucella melitensis biotype 1 (strain ATCC 23456 / CCUG 17765 / NCTC 10094 / 16M).